Reading from the N-terminus, the 494-residue chain is DnaJ-related protein rsp1 (494 aa).

One can recognise a J domain in the interval 12-78; that stretch reads DYYTILGAES…KLRELFDQRR (67 aa). The span at 229–242 shows a compositional bias: polar residues; sequence SEISNGLNSNGVEN. A disordered region spans residues 229–354; sequence SEISNGLNSN…NDSTSNSTEY (126 aa). Over residues 243-256 the composition is skewed to low complexity; it reads SSITKSSPRSSSSS. Residues 270–287 are compositionally biased toward polar residues; that stretch reads IFTSPNTPEHPSVYQTDI. Residues 321–331 are compositionally biased toward low complexity; that stretch reads LSRSKSSSLSR. Residues 332-354 show a composition bias toward polar residues; sequence NQTRSQLNDLSAENDSTSNSTEY.

As to quaternary structure, interacts iwth ssa1.

It is found in the cytoplasm. Its subcellular location is the cytoskeleton. The protein localises to the nucleus. In terms of biological role, has a role in the proper organization of the interphase microtubule cytoskeleton. Required for equatorial microtubule organizing center (eMTOC) disassembly into satellites, contributing to the dynamic redistribution of MTOC components for organization of interphase microtubules. The chain is DnaJ-related protein rsp1 (rsp1) from Schizosaccharomyces pombe (strain 972 / ATCC 24843) (Fission yeast).